The chain runs to 223 residues: Small ribosomal subunit protein uS3 (223 aa).

A KH type-2 domain is found at 39-108; that stretch reads IRNFVKKNSY…NILINIVEVK (70 aa).

This sequence belongs to the universal ribosomal protein uS3 family. As to quaternary structure, part of the 30S ribosomal subunit. Forms a tight complex with proteins S10 and S14.

In terms of biological role, binds the lower part of the 30S subunit head. Binds mRNA in the 70S ribosome, positioning it for translation. The chain is Small ribosomal subunit protein uS3 from Clostridium botulinum (strain Kyoto / Type A2).